Reading from the N-terminus, the 284-residue chain is L-ribulose-5-phosphate 3-epimerase UlaE (284 aa).

The protein belongs to the L-ribulose-5-phosphate 3-epimerase family.

It carries out the reaction L-ribulose 5-phosphate = L-xylulose 5-phosphate. The protein operates within cofactor degradation; L-ascorbate degradation; D-xylulose 5-phosphate from L-ascorbate: step 3/4. Its function is as follows. Catalyzes the isomerization of L-xylulose-5-phosphate to L-ribulose-5-phosphate. Is involved in the anaerobic L-ascorbate utilization. This Escherichia coli O17:K52:H18 (strain UMN026 / ExPEC) protein is L-ribulose-5-phosphate 3-epimerase UlaE.